The sequence spans 81 residues: Xenopsin peptides (81 aa).

A signal peptide spans methionine 1–alanine 20. Residues threonine 21–valine 37 constitute a propeptide that is removed on maturation. The propeptide at glutamate 65–alanine 73 is removed in mature form by a dipeptidylpeptidase.

The protein belongs to the gastrin/cholecystokinin family. Magainin subfamily. XPF is synthesized in the stomach and stored in a novel granular multinucleated cell in the gastric mucosa, it is stored as active, processed peptides in large granules within the granular gland secretions of the skin.

The protein resides in the secreted. Functionally, xenopsin is a neurotensin-like octapeptide. In terms of biological role, XPF has antimicrobial activity. This Xenopus laevis (African clawed frog) protein is Xenopsin peptides.